Reading from the N-terminus, the 318-residue chain is Olfactory receptor 13C2 (318 aa).

Topologically, residues 1 to 25 (MEWENHTILVEFFLKGLSGHPRLEL) are extracellular. N-linked (GlcNAc...) asparagine glycosylation occurs at asparagine 5. A helical transmembrane segment spans residues 26-46 (LFFVLIFIMYVVILLGNGTLI). At 47-54 (LISILDPH) the chain is on the cytoplasmic side. Residues 55–75 (LHTPMYFFLGNLSFLDICYTT) traverse the membrane as a helical segment. The Extracellular segment spans residues 76 to 99 (TSIPSTLVSFLSERKTISLSGCAV). Cysteine 97 and cysteine 189 are disulfide-bonded. The chain crosses the membrane as a helical span at residues 100-120 (QMFLGLAMGTTECVLLGMMAF). Residues 121-139 (DRYVAICNPLRYPIIMSKD) are Cytoplasmic-facing. A helical transmembrane segment spans residues 140–160 (AYVPMAAGSWIIGAVNSAVQS). The Extracellular portion of the chain corresponds to 161–197 (VFVVQLPFCRNNIINHFTCEILAVMKLACADISDNEF). Residues 198 to 217 (IMLVATTLFILTPLLLIIVS) traverse the membrane as a helical segment. The Cytoplasmic portion of the chain corresponds to 218 to 237 (YTLIIVSIFKISSSEGRSKA). A helical membrane pass occupies residues 238 to 258 (SSTCSAHLTVVIIFYGTILFM). The Extracellular segment spans residues 259-277 (YMKPKSKETLNSDDLDATD). Residues 278–298 (KIISMFYGVMTPMMNPLIYSL) form a helical membrane-spanning segment. The Cytoplasmic segment spans residues 299-318 (RNKDVKEAVKHLLNRRFFSK).

It belongs to the G-protein coupled receptor 1 family.

Its subcellular location is the cell membrane. Its function is as follows. Odorant receptor. This Homo sapiens (Human) protein is Olfactory receptor 13C2 (OR13C2).